A 351-amino-acid chain; its full sequence is dTDP-glucose 4,6-dehydratase (351 aa).

NAD(+)-binding positions include 12 to 13 (FI), 32 to 35 (DALT), 58 to 59 (DI), 80 to 84 (FAAES), and Thr99. Ser84 is a binding site for substrate. Thr133 lines the substrate pocket. Residue Asp134 is the Proton donor of the active site. Catalysis depends on proton acceptor residues Glu135 and Tyr158. 158–162 (YSASK) provides a ligand contact to NAD(+). Substrate is bound at residue Asn187. Residue Asn188 participates in NAD(+) binding. Residues 197 to 198 (KL), 213 to 215 (PVY), Arg222, Asn257, and 289 to 293 (DRPGH) each bind substrate.

Belongs to the NAD(P)-dependent epimerase/dehydratase family. dTDP-glucose dehydratase subfamily. As to quaternary structure, homodimer. NAD(+) serves as cofactor.

The enzyme catalyses dTDP-alpha-D-glucose = dTDP-4-dehydro-6-deoxy-alpha-D-glucose + H2O. It functions in the pathway carbohydrate biosynthesis; dTDP-L-rhamnose biosynthesis. It participates in bacterial outer membrane biogenesis; LPS O-antigen biosynthesis. In terms of biological role, catalyzes the dehydration of dTDP-D-glucose to form dTDP-6-deoxy-D-xylo-4-hexulose via a three-step process involving oxidation, dehydration and reduction. The chain is dTDP-glucose 4,6-dehydratase (rfbB) from Xanthomonas campestris pv. campestris (strain B100).